Here is a 1438-residue protein sequence, read N- to C-terminus: Pyochelin synthetase PchE (1438 aa).

Residues 6-85 form the Carrier 1 domain; the sequence is DSRTALRDWL…AWLDLLACAD (80 aa). Serine 46 carries the post-translational modification O-(pantetheine 4'-phosphoryl)serine. Residues 136 to 442 are condensation/cyclization; that stretch reads RTRDVDPQRL…ARRQGQPRSA (307 aa). The adenylation stretch occupies residues 563 to 950; that stretch reads RAAEAPDADA…GRVDQQVKVR (388 aa). Residues 1350 to 1425 enclose the Carrier 2 domain; the sequence is EPLEAHEQAL…GLARHLQAQT (76 aa). O-(pantetheine 4'-phosphoryl)serine is present on serine 1385.

The protein belongs to the NRP synthetase family. Pantetheine 4'-phosphate serves as cofactor.

The enzyme catalyses holo-[peptidyl-carrier protein] + L-cysteine + ATP = L-cysteinyl-[peptidyl-carrier protein] + AMP + diphosphate. The protein operates within siderophore biosynthesis. Its pathway is antifungal biosynthesis. In terms of biological role, involved in the biosynthesis of the siderophore pyochelin. Accepts salicylate activated by PchD at the first peptidyl carrier domain (ArCP), and activates and fixes one molecule of cysteine at the second peptidyl carrier domain (PCP1) via a thioester linkage to the phosphopanthetheine moiety. Then catalyzes the condensation reaction between the salicylate bound to the first site and the cysteine bound to the second site, and the cyclization of the cysteine to form the salicyl-thiazolinyl-S-PCP1 intermediate at the second site. When this intermediate is released by the action of a thioesterase, it produces the antifungal antibiotic dihydroaeruginoic acid (Dha or hydroxyphenyl-thiazolinyl-carboxylate). The protein is Pyochelin synthetase PchE of Pseudomonas aeruginosa (strain UCBPP-PA14).